Reading from the N-terminus, the 802-residue chain is LPS-assembly protein LptD (802 aa).

A signal peptide spans 1–25; it reads MARLFSLKPLVLALGLCFGTHCAAA.

The protein belongs to the LptD family. Component of the lipopolysaccharide transport and assembly complex. Interacts with LptE and LptA.

Its subcellular location is the cell outer membrane. In terms of biological role, together with LptE, is involved in the assembly of lipopolysaccharide (LPS) at the surface of the outer membrane. The chain is LPS-assembly protein LptD from Neisseria meningitidis serogroup B (strain ATCC BAA-335 / MC58).